A 501-amino-acid chain; its full sequence is uncharacterized protein (501 aa).

Glutamate 236 (proton donor) is an active-site residue. The active-site Nucleophile is glutamate 333.

This sequence belongs to the glycosyl hydrolase 5 (cellulase A) family.

It localises to the mitochondrion intermembrane space. This is an uncharacterized protein from Saccharomyces cerevisiae (strain ATCC 204508 / S288c) (Baker's yeast).